Consider the following 173-residue polypeptide: ATP synthase subunit b (173 aa).

Residues 25–45 (LINLVIVIGVLYWFLKGFLGG) form a helical membrane-spanning segment.

The protein belongs to the ATPase B chain family. F-type ATPases have 2 components, F(1) - the catalytic core - and F(0) - the membrane proton channel. F(1) has five subunits: alpha(3), beta(3), gamma(1), delta(1), epsilon(1). F(0) has four main subunits: a(1), b(1), b'(1) and c(10-14). The alpha and beta chains form an alternating ring which encloses part of the gamma chain. F(1) is attached to F(0) by a central stalk formed by the gamma and epsilon chains, while a peripheral stalk is formed by the delta, b and b' chains.

The protein resides in the cellular thylakoid membrane. Its function is as follows. F(1)F(0) ATP synthase produces ATP from ADP in the presence of a proton or sodium gradient. F-type ATPases consist of two structural domains, F(1) containing the extramembraneous catalytic core and F(0) containing the membrane proton channel, linked together by a central stalk and a peripheral stalk. During catalysis, ATP synthesis in the catalytic domain of F(1) is coupled via a rotary mechanism of the central stalk subunits to proton translocation. Functionally, component of the F(0) channel, it forms part of the peripheral stalk, linking F(1) to F(0). In Synechococcus sp. (strain CC9311), this protein is ATP synthase subunit b.